Here is a 456-residue protein sequence, read N- to C-terminus: Bifunctional protein GlmU (456 aa).

Residues 1–228 (MPQNTLNTVI…SHLAAGVNNK (228 aa)) form a pyrophosphorylase region. UDP-N-acetyl-alpha-D-glucosamine contacts are provided by residues 11-14 (LAAG), Lys-25, Gln-75, 80-81 (GT), 102-104 (YGD), Gly-138, Glu-153, Asn-168, and Asn-226. Residue Asp-104 participates in Mg(2+) binding. Mg(2+) is bound at residue Asn-226. The linker stretch occupies residues 229 to 249 (RQLAELERIFQTEQAQELLKA). The interval 250 to 456 (GVTLRDPARF…GWVRPEKNKQ (207 aa)) is N-acetyltransferase. Arg-332 and Lys-350 together coordinate UDP-N-acetyl-alpha-D-glucosamine. His-362 serves as the catalytic Proton acceptor. Residues Tyr-365 and Asn-376 each contribute to the UDP-N-acetyl-alpha-D-glucosamine site. Acetyl-CoA-binding positions include Ala-379, 385–386 (NY), Ser-404, Ala-422, and Arg-439.

This sequence in the N-terminal section; belongs to the N-acetylglucosamine-1-phosphate uridyltransferase family. In the C-terminal section; belongs to the transferase hexapeptide repeat family. As to quaternary structure, homotrimer. Mg(2+) is required as a cofactor.

Its subcellular location is the cytoplasm. It carries out the reaction alpha-D-glucosamine 1-phosphate + acetyl-CoA = N-acetyl-alpha-D-glucosamine 1-phosphate + CoA + H(+). The enzyme catalyses N-acetyl-alpha-D-glucosamine 1-phosphate + UTP + H(+) = UDP-N-acetyl-alpha-D-glucosamine + diphosphate. It participates in nucleotide-sugar biosynthesis; UDP-N-acetyl-alpha-D-glucosamine biosynthesis; N-acetyl-alpha-D-glucosamine 1-phosphate from alpha-D-glucosamine 6-phosphate (route II): step 2/2. The protein operates within nucleotide-sugar biosynthesis; UDP-N-acetyl-alpha-D-glucosamine biosynthesis; UDP-N-acetyl-alpha-D-glucosamine from N-acetyl-alpha-D-glucosamine 1-phosphate: step 1/1. It functions in the pathway bacterial outer membrane biogenesis; LPS lipid A biosynthesis. Functionally, catalyzes the last two sequential reactions in the de novo biosynthetic pathway for UDP-N-acetylglucosamine (UDP-GlcNAc). The C-terminal domain catalyzes the transfer of acetyl group from acetyl coenzyme A to glucosamine-1-phosphate (GlcN-1-P) to produce N-acetylglucosamine-1-phosphate (GlcNAc-1-P), which is converted into UDP-GlcNAc by the transfer of uridine 5-monophosphate (from uridine 5-triphosphate), a reaction catalyzed by the N-terminal domain. The sequence is that of Bifunctional protein GlmU from Neisseria gonorrhoeae.